A 353-amino-acid polypeptide reads, in one-letter code: Melanin-concentrating hormone receptor 1 (353 aa).

A disordered region spans residues 1–28 (MDLEASLLPTGPNASNTSDGPDNLTSAG). Residues 1–45 (MDLEASLLPTGPNASNTSDGPDNLTSAGPPPRTGSISYVNIIMPS) are Extracellular-facing. Over residues 12–26 (PNASNTSDGPDNLTS) the composition is skewed to polar residues. N-linked (GlcNAc...) asparagine glycosylation is found at N13, N16, and N23. A helical membrane pass occupies residues 46–66 (VFGTICLLGIIGNSMVIFAVV). Over 67-79 (KKSKLHWFSNVPD) the chain is Cytoplasmic. The chain crosses the membrane as a helical span at residues 80–100 (IFIINLSVVDLLFLLGMPFMI). Residues 101–116 (HQLMGNGVWHFGETMC) lie on the Extracellular side of the membrane. C116 and C194 are disulfide-bonded. Residues 117–139 (TLITAMDANSQFTSTYILTAMAI) form a helical membrane-spanning segment. The Cytoplasmic portion of the chain corresponds to 140 to 161 (DRYLATVHPISSTRFRKPSVAT). The helical transmembrane segment at 162–182 (LVICLLWALSIISITPVWLYA) threads the bilayer. Topologically, residues 183–204 (RLIPFPGGTVGCGIRLPNPDTD) are extracellular. Residues 205–225 (LYWFTLYQFFLAFALPFVVIT) form a helical membrane-spanning segment. Topologically, residues 226-256 (AAYVRILQRMTSSVAPASQRSIRLRTKRVTR) are cytoplasmic. The chain crosses the membrane as a helical span at residues 257 to 277 (TAIAICLVFFVCWAPYYVLQL). Residues 278 to 294 (TQLSISRPTLTFVYLYN) are Extracellular-facing. Residues 295–315 (AAISLGYANSCLNPFVYIVLC) form a helical membrane-spanning segment. Over 316–353 (ETFRKRLVLSVKPAAQGQLRAVSNAQTAEEERTESKGT) the chain is Cytoplasmic.

It belongs to the G-protein coupled receptor 1 family. In terms of assembly, interacts with NCDN.

It is found in the cell membrane. In terms of biological role, receptor for melanin-concentrating hormone, coupled to both G proteins that inhibit adenylyl cyclase and G proteins that activate phosphoinositide hydrolysis. The chain is Melanin-concentrating hormone receptor 1 from Sus scrofa (Pig).